The following is a 332-amino-acid chain: DNA-directed RNA polymerase subunit alpha (332 aa).

The alpha N-terminal domain (alpha-NTD) stretch occupies residues 1–232 (MKGYLKDFLK…DQLSVFVDLE (232 aa)). The interval 247–332 (IDPVLLRPID…SLGDRARIAG (86 aa)) is alpha C-terminal domain (alpha-CTD).

This sequence belongs to the RNA polymerase alpha chain family. As to quaternary structure, homodimer. The RNAP catalytic core consists of 2 alpha, 1 beta, 1 beta' and 1 omega subunit. When a sigma factor is associated with the core the holoenzyme is formed, which can initiate transcription.

It catalyses the reaction RNA(n) + a ribonucleoside 5'-triphosphate = RNA(n+1) + diphosphate. In terms of biological role, DNA-dependent RNA polymerase catalyzes the transcription of DNA into RNA using the four ribonucleoside triphosphates as substrates. The sequence is that of DNA-directed RNA polymerase subunit alpha from Halorhodospira halophila (strain DSM 244 / SL1) (Ectothiorhodospira halophila (strain DSM 244 / SL1)).